The chain runs to 544 residues: Chaperonin GroEL (544 aa).

ATP contacts are provided by residues 29 to 32 (TLGP), 86 to 90 (DGTTT), glycine 413, 476 to 478 (NAA), and aspartate 492.

The protein belongs to the chaperonin (HSP60) family. In terms of assembly, forms a cylinder of 14 subunits composed of two heptameric rings stacked back-to-back. Interacts with the co-chaperonin GroES.

The protein localises to the cytoplasm. Its subcellular location is the secreted. The enzyme catalyses ATP + H2O + a folded polypeptide = ADP + phosphate + an unfolded polypeptide.. Functionally, together with its co-chaperonin GroES, plays an essential role in assisting protein folding. The GroEL-GroES system forms a nano-cage that allows encapsulation of the non-native substrate proteins and provides a physical environment optimized to promote and accelerate protein folding. The polypeptide is Chaperonin GroEL (Bacillus subtilis (strain 168)).